The following is a 756-amino-acid chain: Xylosyl- and glucuronyltransferase LARGE1 (756 aa).

Topologically, residues 1–10 are cytoplasmic; it reads MLGICRGRRK. Residues 11 to 31 form a helical; Signal-anchor for type II membrane protein membrane-spanning segment; the sequence is FLAASLTVLFVPAVTWIYLFA. Residues 32–756 are Lumenal-facing; it reads GSFEDGKPVS…LKYLTAENNS (725 aa). 2 disordered regions span residues 42–63 and 81–109; these read LSPLESQPHSPRYTASSQRDRE and KQLSLAQGRSPSHHRGNHSKTYSMEEGTG. Residues 44-58 are compositionally biased toward polar residues; the sequence is PLESQPHSPRYTASS. Residues 55 to 90 adopt a coiled-coil conformation; sequence TASSQRDRESLEVRMREVEEENRVLRKQLSLAQGRS. Residues Asn-97, Asn-122, and Asn-148 are each glycosylated (N-linked (GlcNAc...) asparagine). Residues 138–413 are xylosyltransferase activity; it reads IHVAIVCAGY…FLEYDGNLLR (276 aa). Asp-242 and Asp-244 together coordinate Mn(2+). N-linked (GlcNAc...) asparagine glycosylation occurs at Asn-272. Residues 414 to 756 are glucuronyltransferase activity; the sequence is RELFGCPSEA…LKYLTAENNS (343 aa). 2 residues coordinate Mn(2+): Asp-563 and Asp-565.

The protein in the C-terminal section; belongs to the glycosyltransferase 49 family. It in the N-terminal section; belongs to the glycosyltransferase 8 family. The cofactor is Mn(2+).

The protein resides in the golgi apparatus membrane. It carries out the reaction 3-O-[beta-D-GlcA-(1-&gt;3)-beta-D-Xyl-(1-&gt;4)-Rib-ol-P-Rib-ol-P-3-beta-D-GalNAc-(1-&gt;3)-beta-D-GlcNAc-(1-&gt;4)-(O-6-P-alpha-D-Man)]-Thr-[protein] + UDP-alpha-D-xylose = 3-O-[alpha-D-Xyl-(1-&gt;3)-beta-D-GlcA-(1-&gt;4)-beta-D-Xyl-(1-&gt;4)-Rib-ol-P-Rib-ol-P-3-beta-D-GalNAc-(1-&gt;3)-beta-D-GlcNAc-(1-&gt;4)-(O-6-P-alpha-D-Man)]-Thr-[protein] + UDP + H(+). The enzyme catalyses 3-O-{(1-&gt;[3)-alpha-D-Xyl-(1-&gt;3)-beta-D-GlcA-(1-&gt;](n)-4)-beta-D-Xyl-(1-&gt;4)-Rib-ol-P-Rib-ol-P-3-beta-D-GalNAc-(1-&gt;3)-beta-D-GlcNAc-(1-&gt;4)-O-6-P-alpha-D-Man}-L-Thr-[protein] + UDP-alpha-D-glucuronate = 3-O-{beta-D-GlcA-(1-&gt;[3)-alpha-D-Xyl-(1-&gt;3)-beta-D-GlcA-(1-&gt;](n)-4)-beta-D-Xyl-(1-&gt;4)-Rib-ol-P-Rib-ol-P-3-beta-D-GalNAc-(1-&gt;3)-beta-D-GlcNAc-(1-&gt;4)-O-6-P-alpha-D-Man}-L-Thr-[protein] + UDP + H(+). The catalysed reaction is 3-O-{beta-D-GlcA-(1-&gt;[3)-alpha-D-Xyl-(1-&gt;3)-beta-D-GlcA-(1-&gt;](n)-4)-beta-D-Xyl-(1-&gt;4)-Rib-ol-P-Rib-ol-P-3-beta-D-GalNAc-(1-&gt;3)-beta-D-GlcNAc-(1-&gt;4)-O-6-P-alpha-D-Man}-L-Thr-[protein] + UDP-alpha-D-xylose = 3-O-{(1-&gt;[3)-alpha-D-Xyl-(1-&gt;3)-beta-D-GlcA-(1-&gt;](n+1)-4)-beta-D-Xyl-(1-&gt;4)-Rib-ol-P-Rib-ol-P-3-beta-D-GalNAc-(1-&gt;3)-beta-D-GlcNAc-(1-&gt;4)-O-6-P-alpha-D-Man}-L-Thr-[protein] + UDP + H(+). It participates in protein modification; protein glycosylation. Functionally, bifunctional glycosyltransferase with both alpha-1,3-xylosyltransferase and beta-1,3-glucuronyltransferase activities involved in the maturation of alpha-dystroglycan (DAG1) by glycosylation leading to DAG1 binding to laminin G-like domain-containing extracellular proteins with high affinity. Elongates the glucuronyl-beta-1,4-xylose-beta disaccharide primer structure initiated by B4GAT1 by adding repeating units [-3-Xylose-alpha-1,3-GlcA-beta-1-] to produce a heteropolysaccharide. Requires the phosphorylation of core M3 (O-mannosyl trisaccharide) by POMK to elongate the glucuronyl-beta-1,4-xylose-beta disaccharide primer. Plays a key role in skeletal muscle function and regeneration. In Gallus gallus (Chicken), this protein is Xylosyl- and glucuronyltransferase LARGE1.